The primary structure comprises 241 residues: Small ribosomal subunit protein bS6 (241 aa).

The segment covering 97-108 (KPKIRERNRKYT) has biased composition (basic residues). The disordered stretch occupies residues 97 to 241 (KPKIRERNRK…YNNKKPQSSN (145 aa)). The span at 109–118 (LRRDRFDKPN) shows a compositional bias: basic and acidic residues. Low complexity-rich tracts occupy residues 130 to 151 (QDQQ…QASQ) and 161 to 182 (DDFQ…NQSG). Basic and acidic residues predominate over residues 183 to 193 (YHRENNRHNQE). A compositionally biased stretch (low complexity) spans 194 to 210 (NMHQNNKNHQNQTSQTQ).

This sequence belongs to the bacterial ribosomal protein bS6 family.

Functionally, binds together with bS18 to 16S ribosomal RNA. The sequence is that of Small ribosomal subunit protein bS6 from Mesomycoplasma hyopneumoniae (strain J / ATCC 25934 / NCTC 10110) (Mycoplasma hyopneumoniae).